The following is a 278-amino-acid chain: DNA oxidative demethylase ALKBH2 (278 aa).

The segment at 1–49 is disordered; it reads MDRFLVKGAVGSLKRRMEQEQTGGGPAGLAEEEGNSKKNPRRAAPGNGV. The PCNA-binding signature appears at 3 to 7; it reads RFLVK. Substrate-binding positions include 101-103 and 121-123; these read FGK and YTF. Positions 151 to 256 constitute a Fe2OG dioxygenase domain; the sequence is TFNFVLINRY…RVNLTFRKIL (106 aa). Residues Asn-158, Tyr-160, and His-170 each coordinate 2-oxoglutarate. Fe cation contacts are provided by His-170 and Asp-172. Asp-173 serves as a coordination point for substrate. 2-oxoglutarate contacts are provided by His-235, Arg-247, Thr-251, and Arg-253. His-235 lines the Fe cation pocket.

Belongs to the alkB family. In terms of assembly, interacts with PCNA homotrimer; this interaction is enhanced during the S-phase of the cell cycle. Interacts with nucleolar proteins NCL, UBTF and NPM1. Interacts with XRCC5-XRCC6 heterodimer. The cofactor is Fe(2+).

The protein localises to the nucleus. Its subcellular location is the nucleolus. It is found in the nucleoplasm. The enzyme catalyses a methylated nucleobase within DNA + 2-oxoglutarate + O2 = a nucleobase within DNA + formaldehyde + succinate + CO2. It catalyses the reaction an N(1)-methyl-2'-deoxyadenosine in double-stranded DNA + 2-oxoglutarate + O2 = a 2'-deoxyadenosine in double-stranded DNA + formaldehyde + succinate + CO2 + H(+). The catalysed reaction is an N(1)-methyl-2'-deoxyadenosine in single-stranded DNA + 2-oxoglutarate + O2 = a 2'-deoxyadenosine in single-stranded DNA + formaldehyde + succinate + CO2 + H(+). It carries out the reaction an N(3)-methyl-2'-deoxycytidine in double-stranded DNA + 2-oxoglutarate + O2 = a 2'-deoxycytidine in double-stranded DNA + formaldehyde + succinate + CO2 + H(+). The enzyme catalyses an N(3)-methyl-2'-deoxycytidine in single-stranded DNA + 2-oxoglutarate + O2 = a 2'-deoxycytidine in single-stranded DNA + formaldehyde + succinate + CO2 + H(+). It catalyses the reaction a 1,N(6)-etheno-2'-deoxyadenosine in double-stranded DNA + 2-oxoglutarate + O2 + H2O = a 2'-deoxyadenosine in double-stranded DNA + glyoxal + succinate + CO2. The catalysed reaction is a 1,N(6)-etheno-2'-deoxyadenosine in single-stranded DNA + 2-oxoglutarate + O2 + H2O = a 2'-deoxyadenosine in single-stranded DNA + glyoxal + succinate + CO2. It carries out the reaction a 3,N(4)-etheno-2'-deoxycytidine in double-stranded DNA + 2-oxoglutarate + O2 + H2O = a 2'-deoxycytidine in double-stranded DNA + glyoxal + succinate + CO2. The enzyme catalyses a 3,N(4)-etheno-2'-deoxycytidine in single-stranded DNA + 2-oxoglutarate + O2 + H2O = a 2'-deoxycytidine in single-stranded DNA + glyoxal + succinate + CO2. It catalyses the reaction a 1,N(2)-etheno-2'-deoxyguanosine in double-stranded DNA + 2-oxoglutarate + O2 + H2O = a 2'-deoxyguanosine in double-stranded DNA + glyoxal + succinate + CO2. Activated by ascorbate and magnesium ions. In terms of biological role, dioxygenase that repairs alkylated nucleic acid bases by direct reversal oxidative dealkylation. Can process both double-stranded (ds) and single-stranded (ss) DNA substrates, with a strong preference for dsDNA. Uses molecular oxygen, 2-oxoglutarate and iron as cofactors to oxidize the alkyl groups that are subsequently released as aldehydes, regenerating the undamaged bases. Probes the base pair stability, locates a weakened base pair and flips the damaged base to accommodate the lesion in its active site for efficient catalysis. Repairs monoalkylated bases, specifically N1-methyladenine and N3-methylcytosine, as well as higher order alkyl adducts such as bases modified with exocyclic bridged adducts known as etheno adducts including 1,N6-ethenoadenine, 3,N4-ethenocytosine and 1,N2-ethenoguanine. Acts as a gatekeeper of genomic integrity under alkylation stress. Efficiently repairs alkylated lesions in ribosomal DNA (rDNA). These lesions can cause ss- and dsDNA strand breaks that severely impair rDNA transcription. In a response mechanism to DNA damage, associates with PCNA at replication forks to repair alkylated adducts prior to replication. This is DNA oxidative demethylase ALKBH2 (ALKBH2) from Bos taurus (Bovine).